The following is a 541-amino-acid chain: EH domain-containing protein 4 (541 aa).

M1 carries the N-acetylmethionine modification. A disordered region spans residues 1-20 (MFSWMGRQAGGRERSGGMDA). The residue at position 15 (S15) is a Phosphoserine. Residues 58-289 (FENKPMILLV…DLFRDIQSLP (232 aa)) enclose the Dynamin-type G domain. The interval 68–75 (GQYSTGKT) is G1 motif. 68–75 (GQYSTGKT) is an ATP binding site. Positions 94 to 95 (EP) are G2 motif. The interval 156–159 (DSPG) is G3 motif. At S162 the chain carries Phosphoserine. A G4 motif region spans residues 222-225 (NKAD). K223 contacts ATP. V246 is a region of interest (G5 motif). Residue W261 coordinates ATP. The region spanning 447-535 (DKPVYDELFY…PHLVPPSHRK (89 aa)) is the EH domain. Y451 is modified (phosphotyrosine). S459 is subject to Phosphoserine. One can recognise an EF-hand domain in the interval 479–514 (LPNSVLGKIWKLADCDCDGMLDEEEFALAKHLIKIK). Ca(2+) contacts are provided by D492, D494, D496, M498, and E503.

It belongs to the TRAFAC class dynamin-like GTPase superfamily. Dynamin/Fzo/YdjA family. EHD subfamily. In terms of assembly, homooligomer, and heterooligomer with EHD1, EHD2 and EHD3. Forms a complex with EHD4 and MICALL1; the complex controls CDH5 trafficking and coordinates angiogenesis.

It is found in the early endosome membrane. Its subcellular location is the recycling endosome membrane. The protein resides in the cell membrane. The protein localises to the cell junction. It localises to the adherens junction. Functionally, ATP- and membrane-binding protein that probably controls membrane reorganization/tubulation upon ATP hydrolysis. Plays a role in early endosomal transport. During sprouting angiogenesis, in complex with PACSIN2 and MICALL1, forms recycling endosome-like tubular structure at asymmetric adherens junctions to control CDH5 trafficking. This chain is EH domain-containing protein 4, found in Mus musculus (Mouse).